A 777-amino-acid polypeptide reads, in one-letter code: Acyl-homoserine lactone acylase PvdQ (777 aa).

The first 25 residues, M1–A25, serve as a signal peptide directing secretion. Positions A196 to G218 are cleaved as a propeptide — spacer peptide. S219 (nucleophile) is an active-site residue.

The protein belongs to the peptidase S45 family. Heterodimer of an alpha subunit and a beta subunit processed from the same precursor.

The protein resides in the periplasm. The catalysed reaction is an N-acyl-L-homoserine lactone + H2O = L-homoserine lactone + a carboxylate. Catalyzes the deacylation of acyl-homoserine lactone (AHL or acyl-HSL), releasing homoserine lactone (HSL) and the corresponding fatty acid. Possesses a specificity for the degradation of long-chain acyl-HSLs (side chains of 11 to 14 carbons in length). In Pseudomonas fluorescens (strain ATCC BAA-477 / NRRL B-23932 / Pf-5), this protein is Acyl-homoserine lactone acylase PvdQ (pvdQ).